Here is an 82-residue protein sequence, read N- to C-terminus: Small ribosomal subunit protein bS16 (82 aa).

This sequence belongs to the bacterial ribosomal protein bS16 family.

This chain is Small ribosomal subunit protein bS16, found in Yersinia pseudotuberculosis serotype O:1b (strain IP 31758).